A 61-amino-acid chain; its full sequence is Photosystem II reaction center protein K (61 aa).

A propeptide spanning residues M1–A24 is cleaved from the precursor. The chain crosses the membrane as a helical span at residues M40–F60.

It belongs to the PsbK family. In terms of assembly, PSII is composed of 1 copy each of membrane proteins PsbA, PsbB, PsbC, PsbD, PsbE, PsbF, PsbH, PsbI, PsbJ, PsbK, PsbL, PsbM, PsbT, PsbX, PsbY, PsbZ, Psb30/Ycf12, at least 3 peripheral proteins of the oxygen-evolving complex and a large number of cofactors. It forms dimeric complexes.

It localises to the plastid. The protein resides in the chloroplast thylakoid membrane. In terms of biological role, one of the components of the core complex of photosystem II (PSII). PSII is a light-driven water:plastoquinone oxidoreductase that uses light energy to abstract electrons from H(2)O, generating O(2) and a proton gradient subsequently used for ATP formation. It consists of a core antenna complex that captures photons, and an electron transfer chain that converts photonic excitation into a charge separation. The polypeptide is Photosystem II reaction center protein K (Liriodendron tulipifera (Tuliptree)).